A 622-amino-acid polypeptide reads, in one-letter code: Low affinity potassium transport system protein Kup (622 aa).

The next 12 helical transmembrane spans lie at 12 to 32 (ITLAAIGVVYGDIGTSPLYTL), 49 to 69 (VFGFLSLIFWLLILVVSLKYL), 101 to 121 (FLVIIGLIGGSFFYGEVVITP), 134 to 154 (IIAPQLDTWVVPLAIIVLTLL), 163 to 183 (GLVGKLFAPIMLAWFLILAAL), 213 to 233 (VSFVALGAVVLSITGVEALYA), 247 to 267 (WFTVVLPSLVLNYFGQGALLL), 276 to 296 (PFFLLAPDWALVPMLIIATLA), 337 to 357 (IYIPFINWLLYVAVVIVIVSF), 363 to 383 (LAAAYGIAVTGTMVLTSILST), 395 to 415 (FLVALILVGLLCIDLPLFSAN), and 419 to 439 (IVSGGWLPLTLGLVMFIVMTT).

It belongs to the HAK/KUP transporter (TC 2.A.72) family.

The protein resides in the cell inner membrane. The catalysed reaction is K(+)(in) + H(+)(in) = K(+)(out) + H(+)(out). In terms of biological role, responsible for the low-affinity transport of potassium into the cell. Likely operates as a K(+):H(+) symporter. The protein is Low affinity potassium transport system protein Kup of Enterobacter sp. (strain 638).